The sequence spans 505 residues: Deoxyguanosinetriphosphate triphosphohydrolase (505 aa).

In terms of domain architecture, HD spans 66–273 (RLTHSMEVQQ…MEAADDISYC (208 aa)).

It belongs to the dGTPase family. Type 1 subfamily. In terms of assembly, homotetramer. Mg(2+) serves as cofactor.

It catalyses the reaction dGTP + H2O = 2'-deoxyguanosine + triphosphate + H(+). DGTPase preferentially hydrolyzes dGTP over the other canonical NTPs. This is Deoxyguanosinetriphosphate triphosphohydrolase from Salmonella enteritidis PT4 (strain P125109).